We begin with the raw amino-acid sequence, 288 residues long: MKIDISAIKKLRDLTGAGVGDCKEALSSCDGDIEKAKNYLREQGIAKAYKKSTKDVSDGLIAIHVDGNKGAILEVNSETDFVARNEKFQKLVLNLVSLANQYATESIEDFLKHEYISGTSVHDEIMSNIAIIGENIHLNKIGCLSVNSGVVSGYIHNPVIDNLGKIGAIVALESNGDSEKLKVLAKQIAMHIVAAKPEALSLDVLDKDLLNKEREIIKKQVDQLNKPAAVAEKIIDGRMAKFYQDVVLLDQVFVMDSQLTISELVKRKESELAETINLIGYKLFVINK.

The interval 79-82 is involved in Mg(2+) ion dislocation from EF-Tu; the sequence is TDFV.

Belongs to the EF-Ts family.

It localises to the cytoplasm. Associates with the EF-Tu.GDP complex and induces the exchange of GDP to GTP. It remains bound to the aminoacyl-tRNA.EF-Tu.GTP complex up to the GTP hydrolysis stage on the ribosome. The chain is Elongation factor Ts from Ehrlichia canis (strain Jake).